A 234-amino-acid polypeptide reads, in one-letter code: Carboxymethylenebutenolidase 1 (234 aa).

Catalysis depends on residues cysteine 123, aspartate 171, and histidine 201.

Belongs to the dienelactone hydrolase family. In terms of assembly, monomer.

The catalysed reaction is 2-(5-oxo-2,5-dihydrofuran-2-ylidene)acetate + H2O = 4-oxohex-2-enedioate + H(+). The protein operates within aromatic compound metabolism; 3-chlorocatechol degradation. Ring cleavage of cyclic ester dienelactone to produce maleylacetate. This Cupriavidus pinatubonensis (strain JMP 134 / LMG 1197) (Cupriavidus necator (strain JMP 134)) protein is Carboxymethylenebutenolidase 1 (tfdEI).